The primary structure comprises 102 residues: Phosphoribosyl-ATP pyrophosphatase (102 aa).

The protein belongs to the PRA-PH family.

It is found in the cytoplasm. It carries out the reaction 1-(5-phospho-beta-D-ribosyl)-ATP + H2O = 1-(5-phospho-beta-D-ribosyl)-5'-AMP + diphosphate + H(+). It functions in the pathway amino-acid biosynthesis; L-histidine biosynthesis; L-histidine from 5-phospho-alpha-D-ribose 1-diphosphate: step 2/9. This Jannaschia sp. (strain CCS1) protein is Phosphoribosyl-ATP pyrophosphatase.